Consider the following 363-residue polypeptide: Glutamate 5-kinase (363 aa).

ATP is bound at residue K6. Positions 46, 133, and 145 each coordinate substrate. ATP is bound by residues 165–166 (TD) and 207–213 (TGGMHTK). Residues 271–349 (HGRLLLDGGA…REIEALLGYT (79 aa)) enclose the PUA domain.

The protein belongs to the glutamate 5-kinase family.

The protein resides in the cytoplasm. The enzyme catalyses L-glutamate + ATP = L-glutamyl 5-phosphate + ADP. It participates in amino-acid biosynthesis; L-proline biosynthesis; L-glutamate 5-semialdehyde from L-glutamate: step 1/2. Catalyzes the transfer of a phosphate group to glutamate to form L-glutamate 5-phosphate. The protein is Glutamate 5-kinase of Deinococcus radiodurans (strain ATCC 13939 / DSM 20539 / JCM 16871 / CCUG 27074 / LMG 4051 / NBRC 15346 / NCIMB 9279 / VKM B-1422 / R1).